A 325-amino-acid polypeptide reads, in one-letter code: Apoptosis-enhancing nuclease (325 aa).

The Nucleolar localization signal signature appears at 27 to 35 (RKRHKRRSR). A disordered region spans residues 53-105 (LSMPPEPGSSPLPTPFGAVTATEDASSGKQCPRAGSGGAPCSRRPAPGKASGP). The span at 56-66 (PPEPGSSPLPT) shows a compositional bias: pro residues. An Exonuclease domain is found at 110 to 266 (CVAIDCEMVG…EDATTAMELY (157 aa)). A Nuclear localization signal motif is present at residues 165 to 188 (RQHMCKAIPFQVAQKEILKLLKGK). A disordered region spans residues 281–325 (LWTCPEDREPDSSTDMEQYMEDQYWPDDLAHGSRGGAREAQDRRN). Basic and acidic residues predominate over residues 308-325 (DLAHGSRGGAREAQDRRN).

It localises to the nucleus. Its subcellular location is the nucleolus. Its function is as follows. Exonuclease with activity against single- and double-stranded DNA and RNA. Mediates p53-induced apoptosis. When induced by p53 following DNA damage, digests double-stranded DNA to form single-stranded DNA and amplifies DNA damage signals, leading to enhancement of apoptosis. The sequence is that of Apoptosis-enhancing nuclease (AEN) from Pongo abelii (Sumatran orangutan).